We begin with the raw amino-acid sequence, 439 residues long: Sex-determination protein fem-3 (439 aa).

The tract at residues 21–45 (RRLKRKANDDDDDDETVRERVDDAE) is disordered.

In terms of assembly, component of a complex containing fem-1, fem-2 and fem-3. Interacts with fem-1 and fem-2 (via N-terminus). Part of a E3 ubiquitin-protein ligase complex, at least composed of cul-2, elc-1, tra-1, fem-1, fem-2 and fem-3; mediates the ubiquitination and subsequent proteasomal degradation of tra-1. Interacts with tra-1. Interacts with sel-10. Interacts with tra-2.

Its function is as follows. Required for male development. In XO (male) animals, fem-3 directs male differentiation in all tissues. In XX (hermaphrodite) animals, it specifies the first 80 or so germ cells to be sperm. Negatively regulates male development when bound to tra-2. Together with fem-2 associates with the CBC(fem-1) E3 ubiquitin-protein ligase complex which mediates the ubiquitination and subsequent proteasomal degradation of tra-1. The chain is Sex-determination protein fem-3 from Caenorhabditis remanei (Caenorhabditis vulgaris).